Consider the following 458-residue polypeptide: Ammonium transporter Rh type B (458 aa).

The Cytoplasmic segment spans residues 1–13 (MAGSPSRAAGRRL). The chain crosses the membrane as a helical span at residues 14–34 (QLPLLCLFLQGATAVLFAVFV). Residues 35-61 (RYNHKTDAALWHRSNHSNADNEFYFRY) are Extracellular-facing. The N-linked (GlcNAc...) asparagine glycan is linked to asparagine 49. Residues 62–82 (PSFQDVHAMVFVGFGFLMVFL) traverse the membrane as a helical segment. Residues 83-86 (QRYG) are Cytoplasmic-facing. The chain crosses the membrane as a helical span at residues 87-107 (FSSVGFTFLLAAFALQWSTLV). The Extracellular segment spans residues 108–124 (QGFLHSFHGGHIHVGVE). The helical transmembrane segment at 125 to 145 (SMINADFCAGAVLISFGAVLG) threads the bilayer. The Cytoplasmic portion of the chain corresponds to 146–149 (KTGP). A helical membrane pass occupies residues 150-170 (AQLLLMALLEVVLFGINEFVL). Residues 171–178 (LHLLGVRD) are Extracellular-facing. A helical membrane pass occupies residues 179–201 (AGGSMTIHTFGAYFGLVLSRVLY). Topologically, residues 202–219 (RPQLEKSKHRQGSVYHSD) are cytoplasmic. A helical transmembrane segment spans residues 220–240 (LFAMIGTIFLWIFWPSFNAAL). Over 241–251 (TALGAGQHRTA) the chain is Extracellular. A helical membrane pass occupies residues 252–272 (LNTYYSLAASTLGTFALSALV). Over 273–282 (GEDGRLDMVH) the chain is Cytoplasmic. The chain crosses the membrane as a helical span at residues 283-303 (IQNAALAGGVVVGTSSEMMLT). Position 304 (proline 304) is a topological domain, extracellular. A helical transmembrane segment spans residues 305-325 (FGALTAGFLAGTVSTLGYKFF). Over 326-346 (RPILESKFKVQDTCGVHNLHG) the chain is Cytoplasmic. A helical transmembrane segment spans residues 347-367 (MPGVLGALLGVLVAGLATHEA). At 368–393 (YGDGLESVFPLIAEGQRSATSQAMHQ) the chain is on the extracellular side. A helical membrane pass occupies residues 394–414 (LFGLFVTLMFASVGGGLGGLL). Residues 415–458 (LKLPFLDSPPDSQCYEDQVHWQVPGEHEDKAQRPLRVEEADTQA) are Cytoplasmic-facing. The interval 416 to 424 (KLPFLDSPP) is interaction with ANK3. The short motif at 429-432 (YEDQ) is the Basolateral sorting signal element. Residues 439 to 458 (GEHEDKAQRPLRVEEADTQA) form a disordered region.

Belongs to the ammonium transporter (TC 2.A.49) family. Rh subfamily. In terms of assembly, interacts (via C-terminus) with ANK2 and ANK3; required for targeting to the basolateral membrane. N-glycosylated.

Its subcellular location is the cell membrane. It is found in the basolateral cell membrane. It catalyses the reaction NH4(+)(in) = NH4(+)(out). The catalysed reaction is methylamine(out) = methylamine(in). The enzyme catalyses CO2(out) = CO2(in). Ammonium transporter involved in the maintenance of acid-base homeostasis. Transports ammonium and its related derivative methylammonium across the basolateral plasma membrane of epithelial cells likely contributing to renal transepithelial ammonia transport and ammonia metabolism. May transport either NH4(+) or NH3 ammonia species predominantly mediating an electrogenic NH4(+) transport. May act as a CO2 channel providing for renal acid secretion. The polypeptide is Ammonium transporter Rh type B (RHBG) (Pan troglodytes (Chimpanzee)).